Reading from the N-terminus, the 154-residue chain is Protein FAM162A (154 aa).

Positions 76 to 102 (RFKKEDEIPETVSLEMLDTAKNKMRVK) are required for proapoptotic activity. Residues 103–120 (ISYLMIALTVVGCICMVI) form a helical membrane-spanning segment.

It belongs to the UPF0389 family. As to quaternary structure, interacts with HSP90AB1; HSP90AB1 is essential for FAM162A mitochondrial localization and pro-apoptotic activity. Interacts with VDAC2; the interaction is probably involved in inducing mitochondrial permeability transition.

Its subcellular location is the mitochondrion membrane. Functionally, proposed to be involved in regulation of apoptosis; the exact mechanism may differ between cell types/tissues. May be involved in hypoxia-induced cell death of transformed cells implicating cytochrome C release and caspase activation (such as CASP9) and inducing mitochondrial permeability transition. May be involved in hypoxia-induced cell death of neuronal cells probably by promoting release of AIFM1 from mitochondria to cytoplasm and its translocation to the nucleus; however, the involvement of caspases has been reported conflictingly. This is Protein FAM162A (FAM162A) from Pongo abelii (Sumatran orangutan).